We begin with the raw amino-acid sequence, 333 residues long: Biotin synthase (333 aa).

Residues 47–273 (YYGNKVKLNM…MNPTKEIRIA (227 aa)) form the Radical SAM core domain. [4Fe-4S] cluster contacts are provided by Cys-65, Cys-69, and Cys-72. Cys-109, Cys-141, Cys-201, and Arg-271 together coordinate [2Fe-2S] cluster.

This sequence belongs to the radical SAM superfamily. Biotin synthase family. As to quaternary structure, homodimer. The cofactor is [4Fe-4S] cluster. Requires [2Fe-2S] cluster as cofactor.

It catalyses the reaction (4R,5S)-dethiobiotin + (sulfur carrier)-SH + 2 reduced [2Fe-2S]-[ferredoxin] + 2 S-adenosyl-L-methionine = (sulfur carrier)-H + biotin + 2 5'-deoxyadenosine + 2 L-methionine + 2 oxidized [2Fe-2S]-[ferredoxin]. It functions in the pathway cofactor biosynthesis; biotin biosynthesis; biotin from 7,8-diaminononanoate: step 2/2. In terms of biological role, catalyzes the conversion of dethiobiotin (DTB) to biotin by the insertion of a sulfur atom into dethiobiotin via a radical-based mechanism. The sequence is that of Biotin synthase from Geobacillus kaustophilus (strain HTA426).